A 122-amino-acid chain; its full sequence is Large ribosomal subunit protein uL14 (122 aa).

It belongs to the universal ribosomal protein uL14 family. Part of the 50S ribosomal subunit. Forms a cluster with proteins L3 and L19. In the 70S ribosome, L14 and L19 interact and together make contacts with the 16S rRNA in bridges B5 and B8.

In terms of biological role, binds to 23S rRNA. Forms part of two intersubunit bridges in the 70S ribosome. The protein is Large ribosomal subunit protein uL14 of Chlorobaculum tepidum (strain ATCC 49652 / DSM 12025 / NBRC 103806 / TLS) (Chlorobium tepidum).